We begin with the raw amino-acid sequence, 102 residues long: Small ribosomal subunit protein uS10 (102 aa).

It belongs to the universal ribosomal protein uS10 family. Part of the 30S ribosomal subunit.

Functionally, involved in the binding of tRNA to the ribosomes. The sequence is that of Small ribosomal subunit protein uS10 from Streptomyces griseus subsp. griseus (strain JCM 4626 / CBS 651.72 / NBRC 13350 / KCC S-0626 / ISP 5235).